A 104-amino-acid polypeptide reads, in one-letter code: Pyrimidine/purine nucleoside phosphorylase (104 aa).

It belongs to the nucleoside phosphorylase PpnP family.

It carries out the reaction a purine D-ribonucleoside + phosphate = a purine nucleobase + alpha-D-ribose 1-phosphate. The enzyme catalyses adenosine + phosphate = alpha-D-ribose 1-phosphate + adenine. The catalysed reaction is cytidine + phosphate = cytosine + alpha-D-ribose 1-phosphate. It catalyses the reaction guanosine + phosphate = alpha-D-ribose 1-phosphate + guanine. It carries out the reaction inosine + phosphate = alpha-D-ribose 1-phosphate + hypoxanthine. The enzyme catalyses thymidine + phosphate = 2-deoxy-alpha-D-ribose 1-phosphate + thymine. The catalysed reaction is uridine + phosphate = alpha-D-ribose 1-phosphate + uracil. It catalyses the reaction xanthosine + phosphate = alpha-D-ribose 1-phosphate + xanthine. Its function is as follows. Catalyzes the phosphorolysis of diverse nucleosides, yielding D-ribose 1-phosphate and the respective free bases. Can use uridine, adenosine, guanosine, cytidine, thymidine, inosine and xanthosine as substrates. Also catalyzes the reverse reactions. This chain is Pyrimidine/purine nucleoside phosphorylase, found in Geotalea uraniireducens (strain Rf4) (Geobacter uraniireducens).